The chain runs to 325 residues: 4-diphosphocytidyl-2-C-methyl-D-erythritol kinase (325 aa).

Lys-22 is a catalytic residue. 110 to 120 contributes to the ATP binding site; sequence PVAGGMAGGSA. Asp-152 is an active-site residue. The tract at residues 306–325 is disordered; sequence PAPGARVLEAVSTPSPGGRS.

It belongs to the GHMP kinase family. IspE subfamily.

It carries out the reaction 4-CDP-2-C-methyl-D-erythritol + ATP = 4-CDP-2-C-methyl-D-erythritol 2-phosphate + ADP + H(+). Its pathway is isoprenoid biosynthesis; isopentenyl diphosphate biosynthesis via DXP pathway; isopentenyl diphosphate from 1-deoxy-D-xylulose 5-phosphate: step 3/6. Catalyzes the phosphorylation of the position 2 hydroxy group of 4-diphosphocytidyl-2C-methyl-D-erythritol. This Kineococcus radiotolerans (strain ATCC BAA-149 / DSM 14245 / SRS30216) protein is 4-diphosphocytidyl-2-C-methyl-D-erythritol kinase.